Reading from the N-terminus, the 599-residue chain is Ecdysone oxidase (599 aa).

Residues 137 to 140 (NDMV) and 537 to 538 (WH) contribute to the FAD site. His-538 acts as the Proton acceptor in catalysis.

The protein belongs to the GMC oxidoreductase family. It depends on FAD as a cofactor.

The catalysed reaction is ecdysone + O2 = 3-dehydroecdysone + H2O2. Its function is as follows. Involved in the inactivation of ecdysteroid molting hormones by converting ecdysteroids into 3-dehydroecdysteroids. The chain is Ecdysone oxidase from Spodoptera littoralis (Egyptian cotton leafworm).